Reading from the N-terminus, the 283-residue chain is Accumulation of dyads protein 2 (283 aa).

Positions Met1–Ser41 are disordered. At Met1 to Asn89 the chain is on the cytoplasmic side. Residues Pro90–Ala110 form a helical membrane-spanning segment. Over Arg111–Val120 the chain is Extracellular. A helical transmembrane segment spans residues Val121–Ile141. Residues Ala142–Ala151 are Cytoplasmic-facing. The helical transmembrane segment at Leu152–Ile172 threads the bilayer. Residues Leu173 to Asn185 are Extracellular-facing. A helical membrane pass occupies residues Ala186 to Met206. The Cytoplasmic portion of the chain corresponds to Lys207 to Ser208. The chain crosses the membrane as a helical span at residues Thr209–Gly229. Residues His230–Ala240 are Extracellular-facing. A helical membrane pass occupies residues Gly241 to Ala261. The Cytoplasmic segment spans residues Thr262–Phe283.

The protein belongs to the acetate uptake transporter (AceTr) (TC 2.A.96) family.

The protein localises to the cell membrane. Its subcellular location is the vacuole membrane. Transporter protein required for ammonia export and acetate uptake and resistance. Necessary for up-regulation and down-regulation of meiotic plaque (MP) component levels in a dependency on external acetate. Has a role in ascus formation. This is Accumulation of dyads protein 2 (ADY2) from Saccharomyces cerevisiae (strain ATCC 204508 / S288c) (Baker's yeast).